A 64-amino-acid polypeptide reads, in one-letter code: MAKNKGVRLVITLECTECRSNSAKRSPGVSRYTTEKNRRNTTERLEIKKFCPHCNKSAIHKEIK.

Belongs to the bacterial ribosomal protein bL33 family.

It localises to the plastid. The protein localises to the organellar chromatophore. The polypeptide is Large ribosomal subunit protein bL33c (Paulinella chromatophora).